The sequence spans 578 residues: Cytochrome P450 monooxygenase fsoE (578 aa).

A helical transmembrane segment spans residues 28–48 (LLMAVAITYAISWINWFFTSW). Residue Cys-517 participates in heme binding.

It belongs to the cytochrome P450 family. The cofactor is heme.

The protein localises to the membrane. The enzyme catalyses 3-O-(beta-D-glucopyranosyl)-isomotiol + 2 reduced [NADPH--hemoprotein reductase] + 2 O2 = 2-deacetoxyfuscoatroside + 2 oxidized [NADPH--hemoprotein reductase] + 2 H2O + 3 H(+). It carries out the reaction 3-O-(beta-D-glucopyranosyl)-2alpha-hydroxyisomotiol + 2 reduced [NADPH--hemoprotein reductase] + 2 O2 = 2-deacetylfuscoatroside + 2 oxidized [NADPH--hemoprotein reductase] + 2 H2O + 3 H(+). It catalyses the reaction 3-O-(beta-D-glucopyranosyl)-2alpha-acetoxyisomotiol + 2 reduced [NADPH--hemoprotein reductase] + 2 O2 = fuscoatroside + 2 oxidized [NADPH--hemoprotein reductase] + 2 H2O + 3 H(+). The catalysed reaction is isomotiol + reduced [NADPH--hemoprotein reductase] + O2 = 19beta-hydroxyisomotiol + oxidized [NADPH--hemoprotein reductase] + H2O + H(+). The enzyme catalyses 2alpha-hydroxyisomotiol + reduced [NADPH--hemoprotein reductase] + O2 = 2alpha,19beta-dihydroxyisomotiol + oxidized [NADPH--hemoprotein reductase] + H2O + H(+). It carries out the reaction 2alpha,19beta-dihydroxyisomotiol + reduced [NADPH--hemoprotein reductase] + O2 = 2alpha-hydroxyismotiol-19-one + oxidized [NADPH--hemoprotein reductase] + 2 H2O + H(+). It catalyses the reaction 2alpha-hydroxyismotiol-19-one + 2 reduced [NADPH--hemoprotein reductase] + O2 = 2-deacetyl,3-deglucopyranosyl-fuscoatroside + 2 oxidized [NADPH--hemoprotein reductase] + H2O + 3 H(+). It participates in secondary metabolite biosynthesis; terpenoid biosynthesis. Cytochrome P450 monooxygenase; part of the gene cluster that mediates the biosynthesis of the enfumafungin-type antibiotic, fuscoatroside. Within the pathway, fsoE catalyzes the oxidative cleavage of the c19-C20 bond within the E-ring, resulting in the formation of a carboxyl group and a methyl group. FsoE exhibits preferential substrate selectivity toward glycoside substrates over their aglycones. The fuscoatroside biosynthesis is initiated by the cyclization of 2,3(S)-oxidosqualene through FsoA's terpene cyclase (TC) domain, leading to the formation of the fernane skeleton isomotiol, harboring a fernane triterpene skeleton with a C8-C9 double bond. Subsequently, C2-alpha-hydroxylation mediated by fsoD results in the production of 2-alpha-hydroxy-isomotiol, which is further acetylated by fsoF. The glycosyltransferase (GT) domain of FsoA may convert isomotiol, 2-alpha-hydroxy-isomotiol, and the acetylated derivative of 2-alpha-hydroxy-isomotiol into their corresponding glycosides 3-O-(beta-D-glucopyranosyl)-isomotiol, 3-O-(beta-D-glucopyranosyl)-2-alpha-hydroxy-isomotiol, and 3-O-(beta-D-glucopyranosyl)-2-alpha-acetoxy-isomotiol, which then undergo oxidative cleavage under the action of fsoE to form s 2-deacetoxy-fuscoatroside, 2-deacetyl-fuscoatroside, and fuscoatroside, respectively. Although hydroxylation followed by acetylation of 3-O-(beta-D-glucopyranosyl)-isomotiol and 2-deacetoxy-fuscoatroside by fsoD and fsoF could not be ruled out, this process is likely to occur with difficulty due to bulky steric hindrance caused by the presence of a glycan at C3 in these compounds. Interestingly, fsoE can also utilize the aglycones isomotiol and 2-alpha-hydroxy-isomotiol as substrates to generate 19-beta-hydroxy-isomotiol and 2-alpha,19-beta-dihydroxy-isomotiol, respectively. These reactions occur with lower efficiency. Finally, fsoE can further convert 2-alpha,19-beta-dihydroxy-isomotiol into 2-alpha-hydroxy-ismotiol-19-one and 2-alpha-hydroxy-ismotiol-19-one into 2-deacetyl-3-deglucopyranosyl-fuscoatroside. This chain is Cytochrome P450 monooxygenase fsoE, found in Humicola fuscoatra.